The sequence spans 373 residues: Dual-specificity RNA methyltransferase RlmN (373 aa).

E101 serves as the catalytic Proton acceptor. The Radical SAM core domain maps to 107 to 350; the sequence is ENKRTTLCVS…TIIRKIRGAD (244 aa). C114 and C355 are joined by a disulfide. Residues C121, C125, and C128 each coordinate [4Fe-4S] cluster. Residues 179–180, S211, 233–235, and N312 each bind S-adenosyl-L-methionine; these read GE and SLH. C355 functions as the S-methylcysteine intermediate in the catalytic mechanism.

This sequence belongs to the radical SAM superfamily. RlmN family. The cofactor is [4Fe-4S] cluster.

It is found in the cytoplasm. The catalysed reaction is adenosine(2503) in 23S rRNA + 2 reduced [2Fe-2S]-[ferredoxin] + 2 S-adenosyl-L-methionine = 2-methyladenosine(2503) in 23S rRNA + 5'-deoxyadenosine + L-methionine + 2 oxidized [2Fe-2S]-[ferredoxin] + S-adenosyl-L-homocysteine. It carries out the reaction adenosine(37) in tRNA + 2 reduced [2Fe-2S]-[ferredoxin] + 2 S-adenosyl-L-methionine = 2-methyladenosine(37) in tRNA + 5'-deoxyadenosine + L-methionine + 2 oxidized [2Fe-2S]-[ferredoxin] + S-adenosyl-L-homocysteine. In terms of biological role, specifically methylates position 2 of adenine 2503 in 23S rRNA and position 2 of adenine 37 in tRNAs. m2A2503 modification seems to play a crucial role in the proofreading step occurring at the peptidyl transferase center and thus would serve to optimize ribosomal fidelity. In Blochmanniella pennsylvanica (strain BPEN), this protein is Dual-specificity RNA methyltransferase RlmN.